Consider the following 201-residue polypeptide: Aminoglycoside N(6')-acetyltransferase type 1 (201 aa).

The 168-residue stretch at 25–192 (VTLRLMTEHD…PAVYMVQTRQ (168 aa)) folds into the N-acetyltransferase domain. Trp51 and Asp154 together coordinate substrate. Asn159 is a binding site for acetyl-CoA.

In terms of assembly, homodimer.

It catalyses the reaction kanamycin B + acetyl-CoA = N(6')-acetylkanamycin B + CoA + H(+). Catalyzes the transfer of an acetyl group from acetyl-CoA to the 6'-amino group of aminoglycoside molecules conferring resistance to antibiotics containing the purpurosamine ring including amikacin and kanamycin. The sequence is that of Aminoglycoside N(6')-acetyltransferase type 1 (aacA4) from Serratia marcescens.